A 441-amino-acid polypeptide reads, in one-letter code: Transforming protein p54/c-ets-1 (441 aa).

In terms of domain architecture, PNT spans 51–136; sequence ATFSGFAKEQ…EHLEILQKEE (86 aa). Residues 130-243 form an activation domain; required for transcription activation region; that stretch reads EILQKEEAKP…DNMCMGRASR (114 aa). Residues 304–312 are helix HI-1; sequence FKDYVRDRA. Residues 323 to 330 are helix HI-2; sequence AAALAGYT. Residues 335–415 constitute a DNA-binding region (ETS); sequence IQLWQFLLEL…AGKRYVYRFV (81 aa). The tract at residues 418–422 is helix H4; sequence LQSLL. Residues 426 to 432 form a helix H5 region; it reads PEELHAM.

This sequence belongs to the ETS family. Binds DNA as a homodimer; homodimerization is required for transcription activation.

The protein localises to the nucleus. It localises to the cytoplasm. With respect to regulation, autoinhibited by a module composed of four alpha helices (HI-1, HI-2, H4, and H5) that flank the DNA-binding ETS domain, reducing the affinity for DNA. Functionally, transcription factor. Directly controls the expression of cytokine and chemokine genes in a wide variety of different cellular contexts. The protein is Transforming protein p54/c-ets-1 (ETS1) of Gallus gallus (Chicken).